We begin with the raw amino-acid sequence, 999 residues long: Protein Smaug (999 aa).

The span at methionine 1–proline 36 shows a compositional bias: polar residues. Disordered regions lie at residues methionine 1–proline 69 and leucine 329–proline 349. Low complexity-rich tracts occupy residues threonine 44–proline 69 and leucine 329–serine 338. Serine 564 and serine 575 each carry phosphoserine. Residues glutamate 583–methionine 763 are interaction with cup. The 55-residue stretch at glycine 600–lysine 654 folds into the SAM domain. Disordered stretches follow at residues histidine 773–methionine 892 and glutamine 955–proline 977. Composition is skewed to polar residues over residues lysine 801–leucine 822 and histidine 854–proline 864. Serine 972 carries the post-translational modification Phosphoserine.

This sequence belongs to the SMAUG family. Interacts with oskar (osk). Binds to the 3'-UTR of nanos (nos). Interacts with cup, which in turn recruits eIF4-E, leading to an indirect interaction between smg and eIF4-E that prevents mRNA translation. Forms a complex with aub, twin, AGO3, nanos mRNA and piRNAs that targets the nanos 3'-untranslated region, in early embryos. As to expression, at syncytial blastoderm, it is located throughout the bulk cytoplasm and pole plasm. By the time of cellularization, it concentrates at the posterior pole.

The protein resides in the cytoplasm. In terms of biological role, translation regulator that binds to the 3'-UTR of specific mRNAs such as nanos (nos) and prevents their translation. Prevents translation of unlocalized nanos in the bulk cytoplasm via the recruitment of cup. This is Protein Smaug (smg) from Drosophila melanogaster (Fruit fly).